A 72-amino-acid chain; its full sequence is Translational regulator CsrA (72 aa).

This sequence belongs to the CsrA/RsmA family. Homodimer; the beta-strands of each monomer intercalate to form a hydrophobic core, while the alpha-helices form wings that extend away from the core.

Its subcellular location is the cytoplasm. Its function is as follows. A translational regulator that binds mRNA to regulate translation initiation and/or mRNA stability. Usually binds in the 5'-UTR at or near the Shine-Dalgarno sequence preventing ribosome-binding, thus repressing translation. Its main target seems to be the major flagellin gene, while its function is anatagonized by FliW. This chain is Translational regulator CsrA, found in Clostridium botulinum (strain Okra / Type B1).